A 3953-amino-acid polypeptide reads, in one-letter code: Zinc finger protein 469 (3953 aa).

Disordered stretches follow at residues 1–274 (MPGE…VSFQ), 313–465 (WPEE…MFFN), 512–672 (EWQG…FPFP), 763–784 (GHQRSPGPPGLPSPPAAPRVPA), 869–1383 (ADEE…HSEL), 1400–1461 (PKPS…DLPV), 1575–1610 (LQRSKDTRGAPRELAEAESVGRVELGTGTEPPSQRR), 1703–1864 (SKTG…GASS), 1884–1947 (VSNT…TVEG), 1991–2030 (KTQGQGTANQLQPENGVSPGGTDNHASVNASPKTALTGPT), 2070–2700 (LTAA…TLGP), 2716–2915 (AGET…LSDS), 3001–3036 (EMPAPADDSSSSLGDVSPEPPSLERERCDGGLPGNT), and 3072–3110 (GPSFLDFEGTASSQGPQSRRTEEAAGAGRAQGRGRPAKG). Polar residues predominate over residues 187–198 (PPSSFTSTNYTS). Composition is skewed to pro residues over residues 202–211 (TPRPPAPGPP) and 324–335 (YPLPTQPAPSPL). The span at 603 to 623 (STCSSLSPMSSSPANPSSEES) shows a compositional bias: low complexity. Pro residues-rich tracts occupy residues 768-780 (PGPPGLPSPPAAP) and 896-911 (KAPPPLPAATPDPQTP). Positions 944–953 (QQRRGKQLKL) are enriched in basic residues. Over residues 963–975 (AAEGSGSGGGGRA) the composition is skewed to gly residues. Residues 981–991 (RRNDGLGERPP) are compositionally biased toward basic and acidic residues. Over residues 1005–1017 (RADPAPRVPRAAA) the composition is skewed to low complexity. Basic residues-rich tracts occupy residues 1025–1042 (SRRRRLPPRKDPRKRKAR) and 1058–1070 (KNRRHRRLGRRAG). Over residues 1082–1093 (PGAEDRRLREYD) the composition is skewed to basic and acidic residues. Acidic residues predominate over residues 1094-1103 (FASESEEDEQ). The span at 1120-1137 (KRKEVELTQGPREDEPQK) shows a compositional bias: basic and acidic residues. The span at 1158-1177 (PGGSRPGPGRSPQARGPSRS) shows a compositional bias: low complexity. Basic and acidic residues predominate over residues 1213 to 1229 (EETRPSLDFPQEAKEPE). Polar residues-rich tracts occupy residues 1278–1290 (PKPSGSLANTAPH) and 1333–1350 (NPSSTACPKPSVLSSKIS). Residues 1577–1595 (RSKDTRGAPRELAEAESVG) are compositionally biased toward basic and acidic residues. Polar residues-rich tracts occupy residues 1991-2005 (KTQGQGTANQLQPEN) and 2014-2024 (NHASVNASPKT). The span at 2243–2262 (DTPKDSTLRIPEDSRKEKLW) shows a compositional bias: basic and acidic residues. A compositionally biased stretch (polar residues) spans 2409-2435 (TAPSSTASDFQSDSPQSHRNASHQTPQ). The C2H2-type 1 zinc-finger motif lies at 2472–2498 (VTCEVCAASFRSGPGLSRHKARKHRPH). A compositionally biased stretch (basic residues) spans 2488–2498 (SRHKARKHRPH). The segment covering 2506–2521 (SPAALPAQQPLEPLAQ) has biased composition (low complexity). Basic and acidic residues predominate over residues 2534-2546 (SGKERPNHSRGDP). The segment covering 2565 to 2574 (PGSPHSQQLH) has biased composition (low complexity). Basic and acidic residues predominate over residues 2592-2631 (PRPDQAREDELHPKQAEKREGRRWRREPTVDSPSHSEGKS). Residues 2632–2642 (NKKRGKLRGRR) are compositionally biased toward basic residues. Residues 2664–2676 (PSPAMASYAASPS) are compositionally biased toward low complexity. Residues 2777 to 2787 (DSSRAHSRSEE) are compositionally biased toward basic and acidic residues. A compositionally biased stretch (low complexity) spans 2805–2816 (TSSSPADSTTSS). The span at 2869 to 2879 (LTRKRNPHVYG) shows a compositional bias: basic residues. Over residues 3095-3105 (AAGAGRAQGRG) the composition is skewed to low complexity. The C2H2-type 2 zinc-finger motif lies at 3115-3137 (YKCKVCFQRFRSLGELDLHKLAH). The segment at 3232–3322 (TEPAPKHHRG…PDPWAGGEPL (91 aa)) is disordered. Positions 3260-3272 (GEAKKDSPGERAK) are enriched in basic and acidic residues. A compositionally biased stretch (pro residues) spans 3302-3314 (PGPPRTTPSPSPD). C2H2-type zinc fingers lie at residues 3337–3359 (RDCHHCGKRFPKPFKLQRHLAVH) and 3365–3388 (YLCPRCPRVYPEHGELLAHLGGAH). The segment at 3418 to 3442 (FACSSCNYTFAKKEQFDRHMNKHLR) adopts a C2H2-type 5; degenerate zinc-finger fold. Disordered regions lie at residues 3448 to 3501 (FAFR…PILS), 3518 to 3559 (STTK…SPFP), and 3576 to 3925 (ERPE…HRTA). Over residues 3584–3602 (PGSPGPLLQQALPLGASLP) the composition is skewed to low complexity. Residues 3633–3651 (CAPDHFQEDHLLQKEKEVS) show a composition bias toward basic and acidic residues. Low complexity-rich tracts occupy residues 3728–3741 (PGPSSQGSGSPRPG) and 3749–3759 (QPQPASGQLQS). Basic and acidic residues-rich tracts occupy residues 3876 to 3892 (EQRKAEPGHTQRKDRLG) and 3915 to 3925 (EPAEPHTHRTA).

It belongs to the krueppel C2H2-type zinc-finger protein family. In terms of tissue distribution, detected in cornea, sclera, skin fibroblasts and striated muscle.

Its subcellular location is the nucleus. Functionally, may be involved in transcriptional regulation. This chain is Zinc finger protein 469 (ZNF469), found in Homo sapiens (Human).